Reading from the N-terminus, the 823-residue chain is Fibroblast growth factor receptor 2 (823 aa).

An N-terminal signal peptide occupies residues M1–A23. Topologically, residues R24–E379 are extracellular. The region spanning F27–T128 is the Ig-like C2-type 1 domain. A disulfide bridge links C65 with C110. Residues N86, N126, and N148 are each glycosylated (N-linked (GlcNAc...) asparagine). Ig-like C2-type domains lie at P156 to D249 and P258 to T360. The interval K163–R180 is heparin-binding. A disulfide bond links C181 and C233. Residues N230, N243, N267, N299, N320, and N333 are each glycosylated (N-linked (GlcNAc...) asparagine). A disulfide bridge links C280 with C344. A helical transmembrane segment spans residues I380–C400. The Cytoplasmic portion of the chain corresponds to R401–T823. Y468 carries the post-translational modification Phosphotyrosine; by autocatalysis. Positions L483–L772 constitute a Protein kinase domain. ATP-binding positions include L489–V497, K519, E567–A569, and N573. Y588 carries the phosphotyrosine; by autocatalysis modification. The active-site Proton acceptor is D628. A phosphotyrosine; by autocatalysis mark is found at Y658, Y659, and Y771.

It belongs to the protein kinase superfamily. Tyr protein kinase family. Fibroblast growth factor receptor subfamily. In terms of assembly, monomer. Homodimer after ligand binding. Post-translationally, autophosphorylated. Binding of FGF family members together with heparan sulfate proteoglycan or heparin promotes receptor dimerization and autophosphorylation on tyrosine residues. Autophosphorylation occurs in trans between the two FGFR molecules present in the dimer. In terms of processing, N-glycosylated in the endoplasmic reticulum. The N-glycan chains undergo further maturation to an Endo H-resistant form in the Golgi apparatus. Ubiquitinated. FGFR2 is rapidly ubiquitinated after autophosphorylation, leading to internalization and degradation. Subject to degradation both in lysosomes and by the proteasome.

Its subcellular location is the cell membrane. It is found in the golgi apparatus. The protein resides in the cytoplasmic vesicle. It catalyses the reaction L-tyrosyl-[protein] + ATP = O-phospho-L-tyrosyl-[protein] + ADP + H(+). With respect to regulation, present in an inactive conformation in the absence of bound ligand. Ligand binding leads to dimerization and activation by autophosphorylation on tyrosine residues. Tyrosine-protein kinase that acts as a cell-surface receptor for fibroblast growth factors and plays an essential role in the regulation of cell proliferation, differentiation, migration and apoptosis, and in the regulation of embryonic development. Required for normal embryonic patterning, limb bud development, lung morphogenesis, osteogenesis and skin development. Plays an essential role in the regulation of osteoblast differentiation, proliferation and apoptosis, and is required for normal skeleton development. Promotes cell proliferation in keratinocytes and immature osteoblasts, but promotes apoptosis in differentiated osteoblasts. Phosphorylates PLCG1, FRS2 and PAK4. Ligand binding leads to the activation of several signaling cascades. Activation of PLCG1 leads to the production of the cellular signaling molecules diacylglycerol and inositol 1,4,5-trisphosphate. Phosphorylation of FRS2 triggers recruitment of GRB2, GAB1, PIK3R1 and SOS1, and mediates activation of RAS, MAPK1/ERK2, MAPK3/ERK1 and the MAP kinase signaling pathway, as well as of the AKT1 signaling pathway. FGFR2 signaling is down-regulated by ubiquitination, internalization and degradation. Mutations that lead to constitutive kinase activation or impair normal FGFR2 maturation, internalization and degradation lead to aberrant signaling. Over-expressed FGFR2 promotes activation of STAT1. The chain is Fibroblast growth factor receptor 2 (FGFR2) from Gallus gallus (Chicken).